The following is a 219-amino-acid chain: Elongation factor Ts (219 aa).

The involved in Mg(2+) ion dislocation from EF-Tu stretch occupies residues Thr83 to Val86.

Belongs to the EF-Ts family.

It is found in the cytoplasm. In terms of biological role, associates with the EF-Tu.GDP complex and induces the exchange of GDP to GTP. It remains bound to the aminoacyl-tRNA.EF-Tu.GTP complex up to the GTP hydrolysis stage on the ribosome. In Synechococcus sp. (strain WH7803), this protein is Elongation factor Ts.